The chain runs to 687 residues: Glycine--tRNA ligase beta subunit (687 aa).

The protein belongs to the class-II aminoacyl-tRNA synthetase family. As to quaternary structure, tetramer of two alpha and two beta subunits.

The protein resides in the cytoplasm. It carries out the reaction tRNA(Gly) + glycine + ATP = glycyl-tRNA(Gly) + AMP + diphosphate. This Citrifermentans bemidjiense (strain ATCC BAA-1014 / DSM 16622 / JCM 12645 / Bem) (Geobacter bemidjiensis) protein is Glycine--tRNA ligase beta subunit.